Reading from the N-terminus, the 191-residue chain is MACGATLKRPMEFEAALLSPGSPKRRRCAPLPGPTPGLRPPDAEPPPLQMQTPPASLQQPAPPGSERRLPTPEQIFQNIKQEYNRYQRWRHLEVVLSQSEACTSETQPSSSALTAPGSPGAFWMKKDQPTFTLRQVGIICERLLKDYEDKVREEYEQILSTKLAEQYESFVKFTHDQIMRRYGTRPTSYVS.

The disordered stretch occupies residues 17–70 (LLSPGSPKRRRCAPLPGPTPGLRPPDAEPPPLQMQTPPASLQQPAPPGSERRLP). S22 is subject to Phosphoserine. Residues 23–28 (PKRRRC) carry the Nuclear localization signal motif. Positions 31 to 48 (LPGPTPGLRPPDAEPPPL) are enriched in pro residues. A compositionally biased stretch (polar residues) spans 49-59 (QMQTPPASLQQ). Residue T71 is modified to Phosphothreonine. The SYVS motif signature appears at 188 to 191 (SYVS).

It belongs to the akirin family. Expressed in macrophages and satellite cells.

The protein resides in the nucleus. Molecular adapter that acts as a bridge between proteins, and which is involved skeletal muscle development. Functions as a signal transducer for MSTN during skeletal muscle regeneration and myogenesis. May regulate chemotaxis of both macrophages and myoblasts by reorganising actin cytoskeleton, leading to more efficient lamellipodia formation via a PI3 kinase dependent pathway. In contrast to AKIRIN2, not involved in nuclear import of proteasomes. This Mus musculus (Mouse) protein is Akirin-1.